The primary structure comprises 778 residues: Endonuclease MutS2 (778 aa).

328–335 (GPNTGGKT) is an ATP binding site. Positions 703-778 (LDLRGKRYEE…GSGCTIANLG (76 aa)) constitute a Smr domain.

The protein belongs to the DNA mismatch repair MutS family. MutS2 subfamily. As to quaternary structure, homodimer. Binds to stalled ribosomes, contacting rRNA.

Endonuclease that is involved in the suppression of homologous recombination and thus may have a key role in the control of bacterial genetic diversity. In terms of biological role, acts as a ribosome collision sensor, splitting the ribosome into its 2 subunits. Detects stalled/collided 70S ribosomes which it binds and splits by an ATP-hydrolysis driven conformational change. Acts upstream of the ribosome quality control system (RQC), a ribosome-associated complex that mediates the extraction of incompletely synthesized nascent chains from stalled ribosomes and their subsequent degradation. Probably generates substrates for RQC. In Streptococcus equi subsp. zooepidemicus (strain H70), this protein is Endonuclease MutS2.